The chain runs to 346 residues: Uroporphyrinogen decarboxylase (346 aa).

Residues 26–30 (RQAGR), aspartate 76, tyrosine 153, serine 208, and histidine 323 contribute to the substrate site.

Belongs to the uroporphyrinogen decarboxylase family. As to quaternary structure, homodimer.

It localises to the cytoplasm. The enzyme catalyses uroporphyrinogen III + 4 H(+) = coproporphyrinogen III + 4 CO2. Its pathway is porphyrin-containing compound metabolism; protoporphyrin-IX biosynthesis; coproporphyrinogen-III from 5-aminolevulinate: step 4/4. Catalyzes the decarboxylation of four acetate groups of uroporphyrinogen-III to yield coproporphyrinogen-III. In Prochlorococcus marinus (strain AS9601), this protein is Uroporphyrinogen decarboxylase.